A 389-amino-acid polypeptide reads, in one-letter code: Succinate--CoA ligase [ADP-forming] subunit beta (389 aa).

The 236-residue stretch at 9–244 (KELLRQFNVP…IDEEDAAEIE (236 aa)) folds into the ATP-grasp domain. ATP contacts are provided by residues lysine 46, 53 to 55 (GRG), glutamate 99, alanine 102, and glutamate 107. Mg(2+) contacts are provided by asparagine 199 and aspartate 213. Substrate contacts are provided by residues asparagine 264 and 321 to 323 (GIM).

The protein belongs to the succinate/malate CoA ligase beta subunit family. As to quaternary structure, heterotetramer of two alpha and two beta subunits. It depends on Mg(2+) as a cofactor.

The catalysed reaction is succinate + ATP + CoA = succinyl-CoA + ADP + phosphate. It carries out the reaction GTP + succinate + CoA = succinyl-CoA + GDP + phosphate. It participates in carbohydrate metabolism; tricarboxylic acid cycle; succinate from succinyl-CoA (ligase route): step 1/1. In terms of biological role, succinyl-CoA synthetase functions in the citric acid cycle (TCA), coupling the hydrolysis of succinyl-CoA to the synthesis of either ATP or GTP and thus represents the only step of substrate-level phosphorylation in the TCA. The beta subunit provides nucleotide specificity of the enzyme and binds the substrate succinate, while the binding sites for coenzyme A and phosphate are found in the alpha subunit. In Polynucleobacter necessarius subsp. necessarius (strain STIR1), this protein is Succinate--CoA ligase [ADP-forming] subunit beta.